The following is a 349-amino-acid chain: E3 ubiquitin-protein ligase SINA-like 10 (349 aa).

Residues 1–77 form a disordered region; sequence MARFSVCGGD…STSDDSDREV (77 aa). The segment at 113–149 adopts an RING-type; degenerate zinc-finger fold; it reads CPICCEPLKIPIFQCDNGHLACTLCCTKVRNRCPSCT. An SBD region spans residues 163 to 344; that stretch reads VIEASRVSCL…NLQIWIGHGR (182 aa). The SIAH-type zinc finger occupies 166 to 224; the sequence is ASRVSCLNAKYGCKESTSYGNRFSHEQVCVFTPCSCPILDCHYTGYYKDLNNHVRAEHK. Residues Cys-171, Cys-178, His-190, Cys-194, Cys-201, Cys-206, His-218, and His-223 each coordinate Zn(2+).

Belongs to the SINA (Seven in absentia) family.

The catalysed reaction is S-ubiquitinyl-[E2 ubiquitin-conjugating enzyme]-L-cysteine + [acceptor protein]-L-lysine = [E2 ubiquitin-conjugating enzyme]-L-cysteine + N(6)-ubiquitinyl-[acceptor protein]-L-lysine.. Its pathway is protein modification; protein ubiquitination. Functionally, E3 ubiquitin-protein ligase that mediates ubiquitination and subsequent proteasomal degradation of target proteins. E3 ubiquitin ligases accept ubiquitin from an E2 ubiquitin-conjugating enzyme in the form of a thioester and then directly transfers the ubiquitin to targeted substrates. It probably triggers the ubiquitin-mediated degradation of different substrates. The polypeptide is E3 ubiquitin-protein ligase SINA-like 10 (Arabidopsis thaliana (Mouse-ear cress)).